The primary structure comprises 283 residues: Urease accessory protein UreD (283 aa).

Residues 1–20 are disordered; sequence MTQTQPVGTLRLTIDDQGPQ.

It belongs to the UreD family. As to quaternary structure, ureD, UreF and UreG form a complex that acts as a GTP-hydrolysis-dependent molecular chaperone, activating the urease apoprotein by helping to assemble the nickel containing metallocenter of UreC. The UreE protein probably delivers the nickel.

It localises to the cytoplasm. Required for maturation of urease via the functional incorporation of the urease nickel metallocenter. This Corynebacterium glutamicum (strain R) protein is Urease accessory protein UreD.